The chain runs to 330 residues: tRNA pseudouridine synthase B (330 aa).

Catalysis depends on aspartate 42, which acts as the Nucleophile.

Belongs to the pseudouridine synthase TruB family. Type 1 subfamily.

It carries out the reaction uridine(55) in tRNA = pseudouridine(55) in tRNA. Responsible for synthesis of pseudouridine from uracil-55 in the psi GC loop of transfer RNAs. This is tRNA pseudouridine synthase B from Lactococcus lactis subsp. cremoris (strain MG1363).